The following is a 205-amino-acid chain: Spermatogenesis-associated protein 24 (205 aa).

Residues 17-166 (LALDQLRDVI…QQKQIFRNHM (150 aa)) are a coiled coil. A required for interaction with CBX5 and TBPL1 region spans residues 138–185 (EDILNGKENEIKELQQVISQQKQIFRNHMSDFRIQKQQESYMAQVLDQ). A disordered region spans residues 180-205 (AQVLDQKHKKASGTRQARSHQHPREK). Residues 186–205 (KHKKASGTRQARSHQHPREK) show a composition bias toward basic residues.

It belongs to the SPATA24 family. In terms of assembly, homodimer. Interacts with CBX3, CBX5, GMNN, GTF2B, TBPL1 and the polycomb proteins PHCF2, RNF2 and SCMH1 but not with CBX1 or PCGF2.

It is found in the cytoplasm. The protein resides in the nucleus. Its subcellular location is the nucleolus. The protein localises to the nucleoplasm. In terms of biological role, binds DNA with high affinity but does not bind to TATA boxes. Synergises with GMNN and TBP in activation of TATA box-containing promoters and with GMNN and TBPL1 in activation of the NF1 TATA-less promoter. May play a role in cytoplasm movement and removal during spermiogenesis. The protein is Spermatogenesis-associated protein 24 (SPATA24) of Homo sapiens (Human).